The sequence spans 352 residues: rRNA 2'-O-methyltransferase fibrillarin (352 aa).

Residues 1–115 (MGRPEFNRGG…GGAGGMRGGK (115 aa)) are disordered. 22 positions are modified to asymmetric dimethylarginine: arginine 8, arginine 16, arginine 19, arginine 23, arginine 27, arginine 35, arginine 43, arginine 51, arginine 55, arginine 58, arginine 63, arginine 67, arginine 70, arginine 75, arginine 81, arginine 85, arginine 91, arginine 95, arginine 98, arginine 102, arginine 105, and arginine 112. Residues 8–18 (RGGGGGGFRGG) show a composition bias toward gly residues. Residues 26 to 59 (SRGGFGGGGRGGYGGGDRGSFGGGDRGGFRGGRG) are compositionally biased toward gly residues. Positions 66 to 113 (FRGGRGGGDRGGFGGRGSPRGGFGGRGSPRGGRGSPRGGRGGAGGMRG) are enriched in gly residues. Residues 203-204 (TT), 222-223 (EF), 247-248 (DA), and 267-270 (DVAQ) contribute to the S-adenosyl-L-methionine site.

The protein belongs to the methyltransferase superfamily. Fibrillarin family. Component of box C/D small nucleolar ribonucleoprotein (snoRNP) particles. It is associated with the U3, U8 and U13 small nuclear RNAs. Post-translationally, by homology to other fibrillarins, some or all of the N-terminal domain arginines are modified to asymmetric dimethylarginine (DMA).

Its subcellular location is the nucleus. The protein resides in the nucleolus. It is found in the nucleoplasm. It carries out the reaction L-glutaminyl-[histone H2A] + S-adenosyl-L-methionine = N(5)-methyl-L-glutaminyl-[histone H2A] + S-adenosyl-L-homocysteine + H(+). In terms of biological role, S-adenosyl-L-methionine-dependent methyltransferase that has the ability to methylate both RNAs and proteins. Involved in pre-rRNA processing. Utilizes the methyl donor S-adenosyl-L-methionine to catalyze the site-specific 2'-hydroxyl methylation of ribose moieties in pre-ribosomal RNA. Site specificity is provided by a guide RNA that base pairs with the substrate. Methylation occurs at a characteristic distance from the sequence involved in base pairing with the guide RNA. Also acts as a protein methyltransferase by mediating methylation of 'Gln-105' of histone H2A (H2AQ105me), a modification that impairs binding of the FACT complex and is specifically present at 35S ribosomal DNA locus. Plays a role in modulation of nucleolus size most likely through regulating the ribosomal RNA (rRNA) pool. The protein is rRNA 2'-O-methyltransferase fibrillarin of Caenorhabditis elegans.